A 73-amino-acid polypeptide reads, in one-letter code: U3-agatoxin-Ao1j (73 aa).

Positions 1 to 20 (MRTIISLLLLSAMVFAVIEA) are cleaved as a signal peptide. A propeptide spanning residues 21 to 34 (ISLEEGLQLFEGER) is cleaved from the precursor. 4 cysteine pairs are disulfide-bonded: Cys-36/Cys-52, Cys-43/Cys-57, Cys-51/Cys-67, and Cys-59/Cys-65. A Serine amide modification is found at Ser-71.

It belongs to the neurotoxin 07 (Beta/delta-agtx) family. 03 (aga-4) subfamily. Aga sub-subfamily. As to expression, expressed by the venom gland.

The protein resides in the secreted. Insecticidal neurotoxin that induces an irreversible spastic paralysis when injected into insects. Modifies presynaptic voltage-gated sodium channels (Nav), causing them to open at the normal resting potential of the nerve. This leads to spontaneous release of neurotransmitter and repetitive action potentials in motor neurons. The chain is U3-agatoxin-Ao1j from Agelena orientalis (Funnel-web spider).